The following is an 89-amino-acid chain: Large ribosomal subunit protein bL27 (89 aa).

Residues 1–20 are disordered; sequence MAHKKAGGSSRNGRDSAGKR.

This sequence belongs to the bacterial ribosomal protein bL27 family.

This Rhodopseudomonas palustris (strain HaA2) protein is Large ribosomal subunit protein bL27.